We begin with the raw amino-acid sequence, 337 residues long: tRNA N6-adenosine threonylcarbamoyltransferase (337 aa).

Fe cation is bound by residues His111 and His115. Substrate-binding positions include 134 to 138 (LVSGG), Asp167, Gly180, and Asn272. Asp300 is a binding site for Fe cation.

It belongs to the KAE1 / TsaD family. Fe(2+) serves as cofactor.

It localises to the cytoplasm. It carries out the reaction L-threonylcarbamoyladenylate + adenosine(37) in tRNA = N(6)-L-threonylcarbamoyladenosine(37) in tRNA + AMP + H(+). Functionally, required for the formation of a threonylcarbamoyl group on adenosine at position 37 (t(6)A37) in tRNAs that read codons beginning with adenine. Is involved in the transfer of the threonylcarbamoyl moiety of threonylcarbamoyl-AMP (TC-AMP) to the N6 group of A37, together with TsaE and TsaB. TsaD likely plays a direct catalytic role in this reaction. The protein is tRNA N6-adenosine threonylcarbamoyltransferase of Yersinia pseudotuberculosis serotype I (strain IP32953).